Consider the following 415-residue polypeptide: tRNA(Met) cytidine acetate ligase (415 aa).

Residues 7 to 20, Gly-102, Asn-165, and 190 to 191 each bind ATP; these read IVEY…HLYH and RI.

Belongs to the TmcAL family.

The protein localises to the cytoplasm. The enzyme catalyses cytidine(34) in elongator tRNA(Met) + acetate + ATP = N(4)-acetylcytidine(34) in elongator tRNA(Met) + AMP + diphosphate. In terms of biological role, catalyzes the formation of N(4)-acetylcytidine (ac(4)C) at the wobble position of elongator tRNA(Met), using acetate and ATP as substrates. First activates an acetate ion to form acetyladenylate (Ac-AMP) and then transfers the acetyl group to tRNA to form ac(4)C34. This chain is tRNA(Met) cytidine acetate ligase, found in Acetivibrio thermocellus (strain ATCC 27405 / DSM 1237 / JCM 9322 / NBRC 103400 / NCIMB 10682 / NRRL B-4536 / VPI 7372) (Clostridium thermocellum).